The primary structure comprises 153 residues: Ribosomal RNA large subunit methyltransferase H (153 aa).

S-adenosyl-L-methionine is bound by residues Leu71 and Gly102.

It belongs to the RNA methyltransferase RlmH family. Homodimer.

It localises to the cytoplasm. The enzyme catalyses pseudouridine(1915) in 23S rRNA + S-adenosyl-L-methionine = N(3)-methylpseudouridine(1915) in 23S rRNA + S-adenosyl-L-homocysteine + H(+). In terms of biological role, specifically methylates the pseudouridine at position 1915 (m3Psi1915) in 23S rRNA. The chain is Ribosomal RNA large subunit methyltransferase H from Anaeromyxobacter dehalogenans (strain 2CP-1 / ATCC BAA-258).